The primary structure comprises 317 residues: Pantothenate kinase (317 aa).

An ATP-binding site is contributed by Gly-101–Ser-108.

It belongs to the prokaryotic pantothenate kinase family.

Its subcellular location is the cytoplasm. The enzyme catalyses (R)-pantothenate + ATP = (R)-4'-phosphopantothenate + ADP + H(+). It functions in the pathway cofactor biosynthesis; coenzyme A biosynthesis; CoA from (R)-pantothenate: step 1/5. The sequence is that of Pantothenate kinase from Actinobacillus succinogenes (strain ATCC 55618 / DSM 22257 / CCUG 43843 / 130Z).